The following is a 445-amino-acid chain: Xylose isomerase (445 aa).

Active-site residues include H99 and D102. E230, E266, H269, D294, D305, D307, and D337 together coordinate Mg(2+).

It belongs to the xylose isomerase family. Homotetramer. The cofactor is Mg(2+).

The protein resides in the cytoplasm. It carries out the reaction alpha-D-xylose = alpha-D-xylulofuranose. The sequence is that of Xylose isomerase from Geobacillus kaustophilus (strain HTA426).